Reading from the N-terminus, the 133-residue chain is NAD(P)H-quinone oxidoreductase subunit 3 (133 aa).

Helical transmembrane passes span 22-44 (YLLG…SRLL), 77-97 (MFAL…PWAV), and 102-122 (LGLL…VGLA).

Belongs to the complex I subunit 3 family. In terms of assembly, NDH-1 can be composed of about 15 different subunits; different subcomplexes with different compositions have been identified which probably have different functions.

The protein resides in the cellular thylakoid membrane. It carries out the reaction a plastoquinone + NADH + (n+1) H(+)(in) = a plastoquinol + NAD(+) + n H(+)(out). The catalysed reaction is a plastoquinone + NADPH + (n+1) H(+)(in) = a plastoquinol + NADP(+) + n H(+)(out). NDH-1 shuttles electrons from an unknown electron donor, via FMN and iron-sulfur (Fe-S) centers, to quinones in the respiratory and/or the photosynthetic chain. The immediate electron acceptor for the enzyme in this species is believed to be plastoquinone. Couples the redox reaction to proton translocation, and thus conserves the redox energy in a proton gradient. Cyanobacterial NDH-1 also plays a role in inorganic carbon-concentration. In Synechococcus sp. (strain ATCC 27144 / PCC 6301 / SAUG 1402/1) (Anacystis nidulans), this protein is NAD(P)H-quinone oxidoreductase subunit 3.